A 903-amino-acid polypeptide reads, in one-letter code: E3 ubiquitin-protein ligase DDB_G0292642 (903 aa).

5 disordered regions span residues 115–137 (FTLP…SSSD), 167–236 (LLKR…VIGS), 284–366 (VNKT…NNLK), 415–487 (TPSL…TTEI), and 549–576 (DDSE…GSEG). Composition is skewed to low complexity over residues 120-130 (TTNNNNNNTTN) and 178-216 (TTTT…TIDT). Acidic residues predominate over residues 217 to 232 (SSEDDDESISSSDDDI). 2 stretches are compositionally biased toward low complexity: residues 287-301 (TSTT…TTTT) and 311-323 (NRNN…NNNN). The stretch at 313-352 (NNNNNNNNNNNKRFEIESEEESETDISSEEEENNNNNNNN) forms a coiled coil. The segment covering 329–345 (ESEEESETDISSEEEEN) has biased composition (acidic residues). Residues 346 to 364 (NNNNNNNSNNNNNSNNNNN) are compositionally biased toward low complexity. Over residues 415 to 427 (TPSLRLSSAHLPN) the composition is skewed to polar residues. The segment covering 428–443 (TTTTTTTTTTTTTTTT) has biased composition (low complexity). 2 stretches are compositionally biased toward acidic residues: residues 451–466 (NDDD…DSEI) and 549–568 (DDSE…ESDS). Residues 542 to 569 (AELVFEYDDSEEEEEEEEEEEGEESDSE) are a coiled coil. The interval 612-832 (EPVECKICYM…NEYPECFDRQ (221 aa)) is TRIAD supradomain. The Zn(2+) site is built by Cys616, Cys619, Cys634, His636, Cys639, Cys642, Cys661, Cys666, Cys704, Cys709, Cys725, Cys728, Cys733, Cys736, His741, Cys746, Cys782, and Cys785. The RING-type 1 zinc finger occupies 616-666 (CKICYMEYDQSNEVFTLECDHVYCFDCITEHLRILITEGRVLDISCPHPQC). The segment at 683–746 (NWLKYQKFSM…GEYSHEGAKC (64 aa)) adopts an IBR-type zinc-finger fold. The RING-type 2; atypical zinc finger occupies 782–811 (CPTCKSHIEKHDGCNHMTCINCQHQFCWLC). Cys795 is a catalytic residue. Residues Cys800, Cys803, Cys808, Cys811, His819, and Cys828 each contribute to the Zn(2+) site. The helical transmembrane segment at 864 to 884 (TAAFTVGAPLLLIGGAVLLCV) threads the bilayer.

The protein belongs to the RBR family. RNF14 subfamily.

It localises to the membrane. It carries out the reaction [E2 ubiquitin-conjugating enzyme]-S-ubiquitinyl-L-cysteine + [acceptor protein]-L-lysine = [E2 ubiquitin-conjugating enzyme]-L-cysteine + [acceptor protein]-N(6)-ubiquitinyl-L-lysine.. It functions in the pathway protein modification; protein ubiquitination. Its function is as follows. E3 ubiquitin-protein ligase. This chain is E3 ubiquitin-protein ligase DDB_G0292642, found in Dictyostelium discoideum (Social amoeba).